The chain runs to 210 residues: Thymidylate kinase (210 aa).

9 to 16 (GPEGAGKT) lines the ATP pocket.

This sequence belongs to the thymidylate kinase family.

It catalyses the reaction dTMP + ATP = dTDP + ADP. In terms of biological role, phosphorylation of dTMP to form dTDP in both de novo and salvage pathways of dTTP synthesis. This is Thymidylate kinase from Thermomicrobium roseum (strain ATCC 27502 / DSM 5159 / P-2).